Here is a 218-residue protein sequence, read N- to C-terminus: Glycerol-3-phosphate acyltransferase (218 aa).

The next 5 helical transmembrane spans lie at 5 to 25 (ALGM…ILIC), 53 to 73 (LAAA…VWLA), 80 to 100 (PFYL…PVFF), 115 to 135 (IAAI…LTVL), and 138 to 158 (GYSS…VWWF).

Belongs to the PlsY family. In terms of assembly, probably interacts with PlsX.

The protein localises to the cell inner membrane. It catalyses the reaction an acyl phosphate + sn-glycerol 3-phosphate = a 1-acyl-sn-glycero-3-phosphate + phosphate. The protein operates within lipid metabolism; phospholipid metabolism. Catalyzes the transfer of an acyl group from acyl-phosphate (acyl-PO(4)) to glycerol-3-phosphate (G3P) to form lysophosphatidic acid (LPA). This enzyme utilizes acyl-phosphate as fatty acyl donor, but not acyl-CoA or acyl-ACP. This Proteus mirabilis (strain HI4320) protein is Glycerol-3-phosphate acyltransferase.